Consider the following 533-residue polypeptide: Tyrosine-protein kinase transforming protein Fps (533 aa).

Residues 1–46 (ASGQLHRPQPQEHTSTSAAAGTWRHTQASESRHRLPHCSAAPSHQD) are disordered. Positions 11–29 (QEHTSTSAAAGTWRHTQAS) are enriched in polar residues. The F-BAR; degenerate domain occupies 50-124 (MGFGPELWCP…LQEDRQSVCS (75 aa)). The SH2 domain maps to 171-260 (WYHGAIPRSE…KSGIVLTRAV (90 aa)). In terms of domain architecture, Protein kinase spans 272-525 (VLLGERIGRG…PSFGAVHQDL (254 aa)). Residues 278 to 286 (IGRGNFGEV) and Lys-301 each bind ATP. The active-site Proton acceptor is Asp-394. Tyr-424 bears the Phosphotyrosine; by autocatalysis mark.

This sequence belongs to the protein kinase superfamily. Tyr protein kinase family. Fes/fps subfamily.

The catalysed reaction is L-tyrosyl-[protein] + ATP = O-phospho-L-tyrosyl-[protein] + ADP + H(+). This Gallus gallus (Chicken) protein is Tyrosine-protein kinase transforming protein Fps (V-FPS).